We begin with the raw amino-acid sequence, 108 residues long: Pyrimidine/purine nucleoside phosphorylase (108 aa).

It belongs to the nucleoside phosphorylase PpnP family.

It carries out the reaction a purine D-ribonucleoside + phosphate = a purine nucleobase + alpha-D-ribose 1-phosphate. It catalyses the reaction adenosine + phosphate = alpha-D-ribose 1-phosphate + adenine. The enzyme catalyses cytidine + phosphate = cytosine + alpha-D-ribose 1-phosphate. The catalysed reaction is guanosine + phosphate = alpha-D-ribose 1-phosphate + guanine. It carries out the reaction inosine + phosphate = alpha-D-ribose 1-phosphate + hypoxanthine. It catalyses the reaction thymidine + phosphate = 2-deoxy-alpha-D-ribose 1-phosphate + thymine. The enzyme catalyses uridine + phosphate = alpha-D-ribose 1-phosphate + uracil. The catalysed reaction is xanthosine + phosphate = alpha-D-ribose 1-phosphate + xanthine. Functionally, catalyzes the phosphorolysis of diverse nucleosides, yielding D-ribose 1-phosphate and the respective free bases. Can use uridine, adenosine, guanosine, cytidine, thymidine, inosine and xanthosine as substrates. Also catalyzes the reverse reactions. The polypeptide is Pyrimidine/purine nucleoside phosphorylase (Acinetobacter baylyi (strain ATCC 33305 / BD413 / ADP1)).